A 436-amino-acid polypeptide reads, in one-letter code: MVEMLPTVAVLVLAVSVVAKDNTTCDGPCGLRFRQNSQAGTRIVSGQSAQLGAWPWMVSLQIFTSHNSRRYHACGGSLLNSHWVLTAAHCFDNKKKVYDWRLVFGAQEIEYGRNKPVKEPQQERYVQKIVIHEKYNVVTEGNDIALLKITPPVTCGNFIGPCCLPHFKAGPPQIPHTCYVTGWGYIKEKAPRPSPVLMEARVDLIDLDLCNSTQWYNGRVTSTNVCAGYPEGKIDTCQGDSGGPLMCRDNVDSPFVVVGITSWGVGCARAKRPGVYTATWDYLDWIASKIGPNALHLIQPATPHPPTTRHPMVSFHPPSLRPPWYFQHLPSRPLYLRPLRPLLHRPSSTQTSSSLMPLLSPPTPAQPASFTIATQHMRHRTTLSFARRLQRLIEALKMRTYPMKHPSQYSGPRNYHYRFSTFEPLSNKPSEPFLHS.

The signal sequence occupies residues 1-19; that stretch reads MVEMLPTVAVLVLAVSVVA. N22 is a glycosylation site (N-linked (GlcNAc...) asparagine). 6 disulfides stabilise this stretch: C25–C155, C29–C163, C74–C90, C178–C247, C210–C226, and C237–C267. The 249-residue stretch at 43–291 folds into the Peptidase S1 domain; it reads IVSGQSAQLG…YLDWIASKIG (249 aa). Catalysis depends on charge relay system residues H89 and D143. The N-linked (GlcNAc...) asparagine glycan is linked to N211. Residue S241 is the Charge relay system of the active site. Positions 346 to 436 are cleaved as a propeptide — pro-rich; it reads PSSTQTSSSL…NKPSEPFLHS (91 aa).

It belongs to the peptidase S1 family. In terms of assembly, heavy chain (catalytic) and a light chain linked by two disulfide bonds. Forms a heterodimer with SERPINA5.

The enzyme catalyses Preferential cleavage: Arg-|-Xaa, Lys-|-Xaa.. Inhibited by SERPINA5. Its function is as follows. Acrosin is the major protease of mammalian spermatozoa. It is a serine protease of trypsin-like cleavage specificity, it is synthesized in a zymogen form, proacrosin and stored in the acrosome. The chain is Acrosin (Acr) from Mus musculus (Mouse).